The primary structure comprises 269 residues: Hydroxyethylthiazole kinase (269 aa).

Methionine 42 contributes to the substrate binding site. ATP is bound by residues arginine 118 and serine 164. Residue glycine 191 participates in substrate binding.

It belongs to the Thz kinase family. Mg(2+) serves as cofactor.

It carries out the reaction 5-(2-hydroxyethyl)-4-methylthiazole + ATP = 4-methyl-5-(2-phosphooxyethyl)-thiazole + ADP + H(+). It participates in cofactor biosynthesis; thiamine diphosphate biosynthesis; 4-methyl-5-(2-phosphoethyl)-thiazole from 5-(2-hydroxyethyl)-4-methylthiazole: step 1/1. In terms of biological role, catalyzes the phosphorylation of the hydroxyl group of 4-methyl-5-beta-hydroxyethylthiazole (THZ). In Listeria monocytogenes serovar 1/2a (strain ATCC BAA-679 / EGD-e), this protein is Hydroxyethylthiazole kinase.